Here is a 264-residue protein sequence, read N- to C-terminus: H-2 class II histocompatibility antigen, I-A beta chain (264 aa).

Positions 1-31 are cleaved as a signal peptide; the sequence is MVWLPRVPCVAAVILLLTVLSPPVALVRDSR. A beta-1 region spans residues 32-121; it reads PWFLEYCKSE…IFDNFLVPRR (90 aa). The Extracellular segment spans residues 32-225; that stretch reads PWFLEYCKSE…KAQSTSAQNK (194 aa). Disulfide bonds link cysteine 42–cysteine 106 and cysteine 144–cysteine 200. N-linked (GlcNAc...) asparagine glycosylation is present at asparagine 46. Residues 122 to 215 form a beta-2 region; the sequence is VEPTVTVYPT…SLTDPVTVEW (94 aa). Positions 124–214 constitute an Ig-like C1-type domain; the sequence is PTVTVYPTKT…PSLTDPVTVE (91 aa). A connecting peptide region spans residues 216-225; sequence KAQSTSAQNK. Residues 226 to 248 form a helical membrane-spanning segment; it reads MLSGVGGFVLGLLFLRAGLFIYF. The Cytoplasmic segment spans residues 249–264; sequence RNQKGQSGLQPTGLLS.

It belongs to the MHC class II family. Post-translationally, ubiquitinated in immature dendritic cells leading to down-regulation of MHC class II.

It localises to the membrane. The chain is H-2 class II histocompatibility antigen, I-A beta chain (H2-Eb1) from Mus musculus (Mouse).